A 234-amino-acid polypeptide reads, in one-letter code: Sugar fermentation stimulation protein homolog (234 aa).

The protein belongs to the SfsA family.

This is Sugar fermentation stimulation protein homolog from Idiomarina loihiensis (strain ATCC BAA-735 / DSM 15497 / L2-TR).